Here is a 139-residue protein sequence, read N- to C-terminus: Nucleoside diphosphate kinase (139 aa).

ATP-binding residues include lysine 11, phenylalanine 59, arginine 87, threonine 93, arginine 104, and asparagine 114. The active-site Pros-phosphohistidine intermediate is the histidine 117.

This sequence belongs to the NDK family. As to quaternary structure, homotetramer. Requires Mg(2+) as cofactor.

It is found in the cytoplasm. It catalyses the reaction a 2'-deoxyribonucleoside 5'-diphosphate + ATP = a 2'-deoxyribonucleoside 5'-triphosphate + ADP. The catalysed reaction is a ribonucleoside 5'-diphosphate + ATP = a ribonucleoside 5'-triphosphate + ADP. In terms of biological role, major role in the synthesis of nucleoside triphosphates other than ATP. The ATP gamma phosphate is transferred to the NDP beta phosphate via a ping-pong mechanism, using a phosphorylated active-site intermediate. This is Nucleoside diphosphate kinase from Wolbachia pipientis wMel.